The primary structure comprises 102 residues: Auxin-responsive protein SAUR68 (102 aa).

It belongs to the ARG7 family.

The protein localises to the cell membrane. May promote auxin-stimulated organ elongation, such as hypocotyls, stamen filaments and petals. This Arabidopsis thaliana (Mouse-ear cress) protein is Auxin-responsive protein SAUR68.